The sequence spans 601 residues: Elongation factor 4 (601 aa).

Residues 7–189 enclose the tr-type G domain; sequence KHTRNFSIVA…AIVEKVPVPD (183 aa). GTP contacts are provided by residues 19-24 and 136-139; these read DHGKST and NKID.

The protein belongs to the TRAFAC class translation factor GTPase superfamily. Classic translation factor GTPase family. LepA subfamily.

It is found in the cell membrane. It catalyses the reaction GTP + H2O = GDP + phosphate + H(+). Its function is as follows. Required for accurate and efficient protein synthesis under certain stress conditions. May act as a fidelity factor of the translation reaction, by catalyzing a one-codon backward translocation of tRNAs on improperly translocated ribosomes. Back-translocation proceeds from a post-translocation (POST) complex to a pre-translocation (PRE) complex, thus giving elongation factor G a second chance to translocate the tRNAs correctly. Binds to ribosomes in a GTP-dependent manner. The chain is Elongation factor 4 from Clostridium novyi (strain NT).